Here is a 276-residue protein sequence, read N- to C-terminus: Diaminopimelate epimerase (276 aa).

Substrate-binding residues include Asn-13, Gln-46, and Asn-66. Cys-75 (proton donor) is an active-site residue. Substrate is bound by residues 76 to 77 (GN), Asn-159, Asn-192, and 210 to 211 (ER). The Proton acceptor role is filled by Cys-219. 220 to 221 (GT) serves as a coordination point for substrate.

Belongs to the diaminopimelate epimerase family. In terms of assembly, homodimer.

The protein resides in the cytoplasm. It carries out the reaction (2S,6S)-2,6-diaminopimelate = meso-2,6-diaminopimelate. The protein operates within amino-acid biosynthesis; L-lysine biosynthesis via DAP pathway; DL-2,6-diaminopimelate from LL-2,6-diaminopimelate: step 1/1. In terms of biological role, catalyzes the stereoinversion of LL-2,6-diaminopimelate (L,L-DAP) to meso-diaminopimelate (meso-DAP), a precursor of L-lysine and an essential component of the bacterial peptidoglycan. The sequence is that of Diaminopimelate epimerase from Azotobacter vinelandii (strain DJ / ATCC BAA-1303).